Here is an 82-residue protein sequence, read N- to C-terminus: Small ribosomal subunit protein bS16 (82 aa).

Belongs to the bacterial ribosomal protein bS16 family.

This is Small ribosomal subunit protein bS16 from Vibrio parahaemolyticus serotype O3:K6 (strain RIMD 2210633).